Reading from the N-terminus, the 947-residue chain is DNA topoisomerase 1 (947 aa).

The Toprim domain occupies 16 to 140 (RRLVIVESPT…VKRMVFHEIT (125 aa)). Mg(2+)-binding residues include Glu-22 and Asp-109. In terms of domain architecture, Topo IA-type catalytic spans 155-614 (DIDLVDAQET…FYFGGNHGVS (460 aa)). Residues 189-194 (SAGRVQ) form an interaction with DNA region. The active-site O-(5'-phospho-DNA)-tyrosine intermediate is Tyr-343. Disordered regions lie at residues 733–771 (VLPK…GSLL), 846–888 (KRAG…GETN), and 910–947 (ADRR…QSPR). Residues 915–934 (RGPVKRPAKKARKVPAKKAA) show a composition bias toward basic residues.

The protein belongs to the type IA topoisomerase family. As to quaternary structure, monomer. Requires Mg(2+) as cofactor.

The catalysed reaction is ATP-independent breakage of single-stranded DNA, followed by passage and rejoining.. In terms of biological role, releases the supercoiling and torsional tension of DNA, which is introduced during the DNA replication and transcription, by transiently cleaving and rejoining one strand of the DNA duplex. Introduces a single-strand break via transesterification at a target site in duplex DNA. The scissile phosphodiester is attacked by the catalytic tyrosine of the enzyme, resulting in the formation of a DNA-(5'-phosphotyrosyl)-enzyme intermediate and the expulsion of a 3'-OH DNA strand. The free DNA strand then undergoes passage around the unbroken strand, thus removing DNA supercoils. Finally, in the religation step, the DNA 3'-OH attacks the covalent intermediate to expel the active-site tyrosine and restore the DNA phosphodiester backbone. This chain is DNA topoisomerase 1, found in Mycobacterium leprae (strain TN).